The chain runs to 592 residues: Putative phosphatidylinositol 4-kinase alpha-like protein P2 (592 aa).

A pleckstrin homology (PH) domain conferring phosphoinositide binding specificity region spans residues 180–318; the sequence is EQLVEENTGS…ISWQAAIFKL (139 aa). Residues 275–576 enclose the PI3K/PI4K catalytic domain; the sequence is KVKRCGVSEL…VIQSCFLSNR (302 aa). The G-loop stretch occupies residues 281-287; the sequence is VSELEKE. Residues 441–449 form a catalytic loop region; the sequence is QIKDRHNGN. Positions 460–484 are activation loop; sequence HIDFGFMFESSPGGNLGWEPDIKLT.

The protein belongs to the PI3/PI4-kinase family. Type III PI4K subfamily.

The polypeptide is Putative phosphatidylinositol 4-kinase alpha-like protein P2 (PI4KAP2) (Homo sapiens (Human)).